The following is a 367-amino-acid chain: Peptide chain release factor 2 (367 aa).

Residue Gln249 is modified to N5-methylglutamine.

This sequence belongs to the prokaryotic/mitochondrial release factor family. Post-translationally, methylated by PrmC. Methylation increases the termination efficiency of RF2.

Its subcellular location is the cytoplasm. Peptide chain release factor 2 directs the termination of translation in response to the peptide chain termination codons UGA and UAA. The protein is Peptide chain release factor 2 of Pseudothermotoga lettingae (strain ATCC BAA-301 / DSM 14385 / NBRC 107922 / TMO) (Thermotoga lettingae).